Here is a 172-residue protein sequence, read N- to C-terminus: Lipopolysaccharide export system protein LptA (172 aa).

The N-terminal stretch at 1 to 23 (MKLVSNKILFLATMVLASSSAFA) is a signal peptide.

This sequence belongs to the LptA family. In terms of assembly, component of the lipopolysaccharide transport and assembly complex.

The protein resides in the periplasm. Involved in the assembly of lipopolysaccharide (LPS). Required for the translocation of LPS from the inner membrane to the outer membrane. May form a bridge between the inner membrane and the outer membrane, via interactions with LptC and LptD, thereby facilitating LPS transfer across the periplasm. This Haemophilus influenzae (strain ATCC 51907 / DSM 11121 / KW20 / Rd) protein is Lipopolysaccharide export system protein LptA.